The following is a 384-amino-acid chain: Calreticulin-3 (384 aa).

An N-terminal signal peptide occupies residues 1–19 (MAAARVPLWAICVRRVALA). The N-domain stretch occupies residues 20 to 197 (TVYFQEEFLD…GQSIESGSIE (178 aa)). An N-linked (GlcNAc...) asparagine glycan is attached at asparagine 42. Cysteine 105 and cysteine 137 are joined by a disulfide. 4 residues coordinate an alpha-D-glucoside: tyrosine 109, lysine 111, tyrosine 128, and aspartate 135. Repeat copies occupy residues 191 to 202 (IESGSIEYDWQL), 209 to 220 (EKASAEAEGWDQ), 222 to 231 (AKDKSQDWEK), 235 to 246 (DASASKPSDWKG), 250 to 260 (GDWQAAMLQKP), 264 to 272 (DGLKPEGID), and 274 to 284 (DVWLHQKMKNS). Residues 191 to 246 (IESGSIEYDWQLTSLKKMEKASAEAEGWDQAAKDKSQDWEKHFLDASASKPSDWKG) form a 4 X approximate repeats region. The segment at 198 to 294 (YDWQLTSLKK…YLTEYDLSEF (97 aa)) is P-domain. A 3 X approximate repeats region spans residues 250–284 (GDWQAAMLQKPPYQDGLKPEGIDKDVWLHQKMKNS). Positions 295–384 (ENIGAVGLEL…FKGFHRRNEF (90 aa)) are C-domain. Glutamate 303 contacts an alpha-D-glucoside. Positions 381–384 (RNEF) match the Prevents secretion from ER motif.

This sequence belongs to the calreticulin family. In terms of assembly, component of an EIF2 complex at least composed of CELF1/CUGBP1, CALR, CALR3, EIF2S1, EIF2S2, HSP90B1 and HSPA5.

The protein resides in the endoplasmic reticulum lumen. In terms of biological role, during spermatogenesis, may act as a lectin-independent chaperone for specific client proteins such as ADAM3. CALR3 capacity for calcium-binding may be absent or much lower than that of CALR. Required for sperm fertility. The sequence is that of Calreticulin-3 (CALR3) from Bos taurus (Bovine).